Reading from the N-terminus, the 269-residue chain is Shikimate dehydrogenase (NADP(+)) (269 aa).

Shikimate is bound by residues serine 17 to serine 19 and threonine 64. The active-site Proton acceptor is the lysine 68. Glutamate 80 contributes to the NADP(+) binding site. Shikimate-binding residues include asparagine 89 and aspartate 105. NADP(+) contacts are provided by residues glycine 130–alanine 134, asparagine 154–lysine 159, and methionine 213. Tyrosine 215 is a binding site for shikimate. Residue glycine 237 coordinates NADP(+).

Belongs to the shikimate dehydrogenase family. Homodimer.

The enzyme catalyses shikimate + NADP(+) = 3-dehydroshikimate + NADPH + H(+). It functions in the pathway metabolic intermediate biosynthesis; chorismate biosynthesis; chorismate from D-erythrose 4-phosphate and phosphoenolpyruvate: step 4/7. Involved in the biosynthesis of the chorismate, which leads to the biosynthesis of aromatic amino acids. Catalyzes the reversible NADPH linked reduction of 3-dehydroshikimate (DHSA) to yield shikimate (SA). This chain is Shikimate dehydrogenase (NADP(+)), found in Neisseria meningitidis serogroup B (strain ATCC BAA-335 / MC58).